Here is a 2549-residue protein sequence, read N- to C-terminus: MLGTGPAAATTAATTSSNVSVLQQFASGLKSRNEETRAKAAKELQHYVTMELREMSQEESTRFYDQLNHHIFELVSSSDANERKGGILAIASLIGVEGGNATRIGRFANYLRNLLPSNDPVVMEMASKAIGRLAMAGDTFTAEYVEFEVKRALEWLGADRNEGRRHAAVLVLRELAISVPTFFFQQVQPFFDNIFVAVWDPKQAIREGAVAALRACLILTTQREPKEMQKPQWYRHTFEEAEKGFDETLAKEKGMNRDDRIHGALLILNELVRISSMEGERLREEMEEITQQQLVHDKYCKDLMGFGTKPRHITPFTSFQAVQPQQSNALVGLLGYSSHQGLMGFGTSPSPAKSTLVESRCCRDLMEEKFDQVCQWVLKCRNSKNSLIQMTILNLLPRLAAFRPSAFTDTQYLQDTMNHVLSCVKKEKERTAAFQALGLLSVAVRSEFKVYLPRVLDIIRAALPPKDFAHKRQKAMQVDATVFTCISMLARAMGPGIQQDIKELLEPMLAVGLSPALTAVLYDLSRQIPQLKKDIQDGLLKMLSLVLMHKPLRHPGMPKGLAHQLASPGLTTLPEASDVGSITLALRTLGSFEFEGHSLTQFVRHCADHFLNSEHKEIRMEAARTCSRLLTPSIHLISGHAHVVSQTAVQVVADVLSKLLVVGITDPDPDIRYCVLASLDERFDAHLAQAENLQALFVALNDQVFEIRELAICTVGRLSSMNPAFVMPFLRKMLIQILTELEHSGIGRIKEQSARMLGHLVSNAPRLIRPYMEPILKALILKLKDPDPDPNPGVINNVLATIGELAQVSGLEMRKWVDELFIIIMDMLQDSSLLAKRQVALWTLGQLVASTGYVVEPYRKYPTLLEVLLNFLKTEQNQGTRREAIRVLGLLGALDPYKHKVNIGMIDQSRDASAVSLSESKSSQDSSDYSTSEMLVNMGNLPLDEFYPAVSMVALMRIFRDQSLSHHHTMVVQAITFIFKSLGLKCVQFLPQVMPTFLNVIRVCDGAIREFLFQQLGMLVSFVKSHIRPYMDEIVTLMREFWVMNTSIQSTIILLIEQIVVALGGEFKLYLPQLIPHMLRVFMHDNSPGRIVSIKLLAAIQLFGANLDDYLHLLLPPIVKLFDAPEAPLPSRKAALETVDRLTESLDFTDYASRIIHPIVRTLDQSPELRSTAMDTLSSLVFQLGKKYQIFIPMVNKVLVRHRINHQRYDVLICRIVKGYTLADEEEDPLIYQHRMLRSGQGDALASGPVETGPMKKLHVSTINLQKAWGAARRVSKDDWLEWLRRLSLELLKDSSSPSLRSCWALAQAYNPMARDLFNAAFVSCWSELNEDQQDELIRSIELALTSQDIAEVTQTLLNLAEFMEHSDKGPLPLRDDNGIVLLGERAAKCRAYAKALHYKELEFQKGPTPAILESLISINNKLQQPEAAAGVLEYAMKHFGELEIQATWYEKLHEWEDALVAYDKKMDTNKDDPELMLGRMRCLEALGEWGQLHQQCCEKWTLVNDETQAKMARMAAAAAWGLGQWDSMEEYTCMIPRDTHDGAFYRAVLALHQDLFSLAQQCIDKARDLLDAELTAMAGESYSRAYGAMVSCHMLSELEEVIQYKLVPERREIIRQIWWERLQGCQRIVEDWQKILMVRSLVVSPHEDMRTWLKYASLCGKSGRLALAHKTLVLLLGVDPSRQLDHPLPTVHPQVTYAYMKNMWKSARKIDAFQHMQHFVQTMQQQAQHAIATEDQQHKQELHKLMARCFLKLGEWQLNLQGINESTIPKVLQYYSAATEHDRSWYKAWHAWAVMNFEAVLHYKHQNQARDEKKKLRHASGANITNATTAATTAATATTTASTEGSNSESEAESTENSPTPSPLQKKVTEDLSKTLLMYTVPAVQGFFRSISLSRGNNLQDTLRVLTLWFDYGHWPDVNEALVEGVKAIQIDTWLQVIPQLIARIDTPRPLVGRLIHQLLTDIGRYHPQALIYPLTVASKSTTTARHNAANKILKNMCEHSNTLVQQAMMVSEELIRVAILWHEMWHEGLEEASRLYFGERNVKGMFEVLEPLHAMMERGPQTLKETSFNQAYGRDLMEAQEWCRKYMKSGNVKDLTQAWDLYYHVFRRISKQLPQLTSLELQYVSPKLLMCRDLELAVPGTYDPNQPIIRIQSIAPSLQVITSKQRPRKLTLMGSNGHEFVFLLKGHEDLRQDERVMQLFGLVNTLLANDPTSLRKNLSIQRYAVIPLSTNSGLIGWVPHCDTLHALIRDYREKKKILLNIEHRIMLRMAPDYDHLTLMQKVEVFEHAVNNTAGDDLAKLLWLKSPSSEVWFDRRTNYTRSLAVMSMVGYILGLGDRHPSNLMLDRLSGKILHIDFGDCFEVAMTREKFPEKIPFRLTRMLTNAMEVTGLDGNYRITCHTVMEVLREHKDSVMAVLEAFVYDPLLNWRLMDTNTKGNKRSRTRTDSYSAGQSVEILDGVELGEPAHKKTGTTVPESIHSFIGDGLVKPEALNKKAIQIINRVRDKLTGRDFSHDDTLDVPTQVELLIKQATSHENLCQCYIGWCPFW.

At methionine 1 the chain carries N-acetylmethionine. An interaction with NBN region spans residues 1–651; sequence MLGTGPAAAT…HVVSQTAVQV (651 aa). HEAT repeat units follow at residues 16–53, 55–99, 100–137, 138–179, 180–220, 222–276, 277–313, 314–364, 365–409, 410–445, 446–494, 495–529, 530–563, 564–596, 597–636, 637–683, 686–724, 727–766, 769–811, 814–853, 857–893, 894–942, 943–988, 989–1027, 1029–1068, 1069–1105, 1106–1144, 1145–1188, 1189–1225, 1226–1273, 1274–1311, and 1312–1345; these read SSNV…MELR, MSQE…VEGG, NATR…AMAG, DTFT…AISV, PTFF…LILT, QREP…RISS, MEGE…PRHI, TPFT…CCRD, LMEE…AFTD, TQYL…VAVR, SEFK…RAMG, PGIQ…RQIP, QLKK…GLAH, QLAS…EFEG, HSLT…SIHL, ISGH…DERF, HLAQ…MNPA, MPFL…NAPR, RPYM…VSGL, RKWV…STGY, PYRK…LLGA, LDPY…GNLP, LDEF…KCVQ, FLPQ…KSHI, PYMD…GEFK, LYLP…LFGA, NLDD…RLTE, SLDF…GKKY, QIFI…LADE, EEDP…GAAR, RVSK…QAYN, and PMAR…ELAL. A Phosphoserine modification is found at serine 567. A Phosphothreonine modification is found at threonine 1162. The residue at position 1218 (lysine 1218) is an N6-acetyllysine. Serine 1261 carries the phosphoserine modification. 16 TPR repeats span residues 1346 to 1382, 1383 to 1408, 1409 to 1442, 1443 to 1473, 1474 to 1507, 1508 to 1541, 1542 to 1574, 1575 to 1614, 1615 to 1649, 1650 to 1693, 1694 to 1731, 1732 to 1786, 1787 to 1846, 1898 to 1930, 1931 to 1970, and 1971 to 2005; these read TSQD…GIVL, LGER…QKGP, TPAI…HFGE, LEIQ…NKDD, PELM…VNDE, TQAK…RDTH, DGAF…LDAE, LTAM…RREI, IRQI…PHED, MRTW…PTVH, PQVT…AQHA, IATE…DRSW, YKAW…STEG, NNLQ…VKAI, QIDT…YHPQ, and ALIY…SNTL. In terms of domain architecture, FAT spans 1382 to 1982; sequence LLGERAAKCR…IYPLTVASKS (601 aa). 3 residues coordinate 1D-myo-inositol hexakisphosphate: lysine 1662, lysine 1702, and arginine 1749. Residues 1812-1867 are disordered; it reads DEKKKLRHASGANITNATTAATTAATATTTASTEGSNSESEAESTENSPTPSPLQK. Low complexity predominate over residues 1820–1860; sequence ASGANITNATTAATTAATATTTASTEGSNSESEAESTENSP. Residues 2012–2144 form a sufficient for interaction with the FKBP1A/rapamycin complex region; sequence VSEELIRVAI…DLELAVPGTY (133 aa). Residue lysine 2066 forms a Glycyl lysine isopeptide (Lys-Gly) (interchain with G-Cter in ubiquitin) linkage. A PI3K/PI4K catalytic domain is found at 2156–2469; it reads IAPSLQVITS…GVELGEPAHK (314 aa). Residue serine 2159 is modified to Phosphoserine; by TBK1. A G-loop region spans residues 2162–2168; the sequence is VITSKQR. The residue at position 2164 (threonine 2164) is a Phosphothreonine. ATP is bound by residues serine 2165 and glutamine 2167. Position 2173 is a phosphothreonine; by PKB/AKT1 (threonine 2173). ATP-binding residues include leucine 2185, lysine 2187, glutamate 2190, tyrosine 2225, glycine 2238, tryptophan 2239, valine 2240, and threonine 2245. Residues 2258-2296 are interaction with MLST8; sequence KILLNIEHRIMLRMAPDYDHLTLMQKVEVFEHAVNNTAG. The catalytic loop stretch occupies residues 2335–2343; it reads GLGDRHPSN. Asparagine 2343 provides a ligand contact to Mg(2+). Positions 2345 and 2356 each coordinate ATP. The activation loop stretch occupies residues 2355 to 2380; it reads HIDFGDCFEVAMTREKFPEKIPFRLT. Aspartate 2357 is a Mg(2+) binding site. Threonine 2446 is modified (phosphothreonine; by RPS6KB1). Serine 2448 bears the Phosphoserine; by RPS6KB1 mark. At serine 2478 the chain carries Phosphoserine. Serine 2481 bears the Phosphoserine; by autocatalysis mark. The region spanning 2517–2549 is the FATC domain; sequence DTLDVPTQVELLIKQATSHENLCQCYIGWCPFW.

It belongs to the PI3/PI4-kinase family. As to quaternary structure, part of the mechanistic target of rapamycin complex 1 (mTORC1) which contains MTOR, MLST8 and RPTOR. The mTORC1 complex is a 1 Md obligate dimer of two stoichiometric heterotetramers with overall dimensions of 290 A x 210 A x 135 A. It has a rhomboid shape and a central cavity, the dimeric interfaces are formed by interlocking interactions between the two MTOR and the two RPTOR subunits. The MLST8 subunit forms distal foot-like protuberances, and contacts only one MTOR within the complex, while the small AKT1S1/PRAS40 localizes to the midsection of the central core, in close proximity to RPTOR. mTORC1 associates with AKT1S1/PRAS40, which inhibits its activity by blocking MTOR substrate-recruitment site. Component of the mechanistic target of rapamycin complex 2 (mTORC2), consisting in two heterotretramers composed of MTOR, MLST8, RICTOR and MAPKAP1/SIN1. Interacts with PLPP7 and PML. Interacts with PRR5 and RICTOR; the interaction is direct within the mTORC2 complex and interaction with RICTOR is enhanced by deubiquitination of RICTOR by USP9X. mTORC1 and mTORC2 associate with DEPTOR, which regulates their activity. Interacts with WAC; WAC positively regulates MTOR activity by promoting the assembly of the TTT complex composed of TELO2, TTI1 and TTI2 and the RUVBL complex composed of RUVBL1 and RUVBL2 into the TTT-RUVBL complex which leads to the dimerization of the mTORC1 complex and its subsequent activation. Interacts with UBQLN1. Interacts with TTI1 and TELO2. Interacts with CLIP1; phosphorylates and regulates CLIP1. Interacts with NBN. Interacts with HTR6. Interacts with BRAT1. Interacts with MEAK7 (via C-terminal domain); the interaction increases upon nutrient stimulation. Interacts with TM4SF5; the interaction is positively regulated by arginine and is negatively regulated by leucine. Interacts with GPR137B. Interacts with NCKAP1L. Interacts with TPCN1 and TPCN2; the interaction is required for TPCN1 and TPCN2 sensitivity to ATP. Interacts with ATP6V1A and with CRYAB, forming a ternary complex. Interacts with SLC38A7; this interaction mediates the recruitment of mTORC1 to the lysosome and its subsequent activation. Interacts with TSPAN8. In terms of processing, autophosphorylates when part of mTORC1 or mTORC2. Phosphorylation at Ser-1261, Ser-2159 and Thr-2164 promotes autophosphorylation. Phosphorylated at Ser-2448 by RPS6KB1. Phosphorylation in the kinase domain modulates the interactions of MTOR with RPTOR and AKT1S1/PRAS40 and leads to increased intrinsic mTORC1 kinase activity. Phosphorylation at Ser-2159 by TBK1 in response to growth factors and pathogen recognition receptors promotes mTORC1 activity. Phosphorylation at Ser-2159 by TBK1 in response to EGF growth factor promotes mTORC2 activity, leading to AKT1 phosphorylation and activation. Phosphorylation at Thr-2173 in the ATP-binding region by AKT1 strongly reduces kinase activity. Post-translationally, ubiquitinated at Lys-2066 by the SCF(FBXO22) complex via 'Lys-27'-linked ubiquitination prevents mTORC1 substrate recruitment. As to expression, expressed in numerous tissues, with highest levels in testis.

It is found in the lysosome membrane. The protein localises to the endoplasmic reticulum membrane. It localises to the golgi apparatus membrane. The protein resides in the cell membrane. Its subcellular location is the mitochondrion outer membrane. It is found in the cytoplasm. The protein localises to the nucleus. It localises to the PML body. The protein resides in the microsome membrane. Its subcellular location is the cytoplasmic vesicle. It is found in the phagosome. It catalyses the reaction L-seryl-[protein] + ATP = O-phospho-L-seryl-[protein] + ADP + H(+). The catalysed reaction is L-threonyl-[protein] + ATP = O-phospho-L-threonyl-[protein] + ADP + H(+). It carries out the reaction L-tyrosyl-[protein] + ATP = O-phospho-L-tyrosyl-[protein] + ADP + H(+). The mTORC1 complex is activated in response to nutrients, growth factors or amino acids: activation requires relocalization of the mTORC1 complex to lysosomes that is mediated by the Ragulator complex, SLC38A9, and the Rag GTPases RagA/RRAGA, RagB/RRAGB, RagC/RRAGC and RagD/RRAGD. Activation of mTORC1 by growth factors such as insulin involves AKT1-mediated phosphorylation of TSC1-TSC2, which leads to the activation of the RHEB GTPase a potent activator of the protein kinase activity of mTORC1. Insulin-stimulated and amino acid-dependent phosphorylation at Ser-1261 promotes autophosphorylation and the activation of mTORC1. On the other hand, low cellular energy levels can inhibit mTORC1 through activation of PRKAA1 while hypoxia inhibits mTORC1 through a REDD1-dependent mechanism which may also require PRKAA1. The kinase activity of MTOR within the mTORC1 complex is positively regulated by MLST8. The kinase activity of MTOR is inhibited by DEPTOR and AKT1S1. The non-canonical mTORC1 complex is independent of the RHEB GTPase and specifically mediates phosphorylation of MiT/TFE factors TFEB and TFE3 but not other mTORC1 substrates: it is activated by FLCN, which activates Rag GTPases RagC/RRAGC and RagD/RRAGD. MTOR is the target of the immunosuppressive and anti-cancer drug rapamycin which acts in complex with FKBP1A/FKBP12, and specifically inhibits its kinase activity. mTORC2 is also activated by growth factors, but seems to be nutrient-insensitive. mTORC2 associates and is directly activated by ribosomes. mTORC2 may also be regulated by RHEB but in an indirect manner through the PI3K signaling pathway. Serine/threonine protein kinase which is a central regulator of cellular metabolism, growth and survival in response to hormones, growth factors, nutrients, energy and stress signals. MTOR directly or indirectly regulates the phosphorylation of at least 800 proteins. Functions as part of 2 structurally and functionally distinct signaling complexes mTORC1 and mTORC2 (mTOR complex 1 and 2). In response to nutrients, growth factors or amino acids, mTORC1 is recruited to the lysosome membrane and promotes protein, lipid and nucleotide synthesis by phosphorylating key regulators of mRNA translation and ribosome synthesis. This includes phosphorylation of EIF4EBP1 and release of its inhibition toward the elongation initiation factor 4E (eiF4E). Moreover, phosphorylates and activates RPS6KB1 and RPS6KB2 that promote protein synthesis by modulating the activity of their downstream targets including ribosomal protein S6, eukaryotic translation initiation factor EIF4B, and the inhibitor of translation initiation PDCD4. Stimulates the pyrimidine biosynthesis pathway, both by acute regulation through RPS6KB1-mediated phosphorylation of the biosynthetic enzyme CAD, and delayed regulation, through transcriptional enhancement of the pentose phosphate pathway which produces 5-phosphoribosyl-1-pyrophosphate (PRPP), an allosteric activator of CAD at a later step in synthesis, this function is dependent on the mTORC1 complex. Regulates ribosome synthesis by activating RNA polymerase III-dependent transcription through phosphorylation and inhibition of MAF1 an RNA polymerase III-repressor. Activates dormant ribosomes by mediating phosphorylation of SERBP1, leading to SERBP1 inactivation and reactivation of translation. In parallel to protein synthesis, also regulates lipid synthesis through SREBF1/SREBP1 and LPIN1. To maintain energy homeostasis mTORC1 may also regulate mitochondrial biogenesis through regulation of PPARGC1A. In the same time, mTORC1 inhibits catabolic pathways: negatively regulates autophagy through phosphorylation of ULK1. Under nutrient sufficiency, phosphorylates ULK1 at 'Ser-758', disrupting the interaction with AMPK and preventing activation of ULK1. Also prevents autophagy through phosphorylation of the autophagy inhibitor DAP. Also prevents autophagy by phosphorylating RUBCNL/Pacer under nutrient-rich conditions. Prevents autophagy by mediating phosphorylation of AMBRA1, thereby inhibiting AMBRA1 ability to mediate ubiquitination of ULK1 and interaction between AMBRA1 and PPP2CA. mTORC1 exerts a feedback control on upstream growth factor signaling that includes phosphorylation and activation of GRB10 a INSR-dependent signaling suppressor. Among other potential targets mTORC1 may phosphorylate CLIP1 and regulate microtubules. The mTORC1 complex is inhibited in response to starvation and amino acid depletion. The non-canonical mTORC1 complex, which acts independently of RHEB, specifically mediates phosphorylation of MiT/TFE factors MITF, TFEB and TFE3 in the presence of nutrients, promoting their cytosolic retention and inactivation. Upon starvation or lysosomal stress, inhibition of mTORC1 induces dephosphorylation and nuclear translocation of TFEB and TFE3, promoting their transcription factor activity. The mTORC1 complex regulates pyroptosis in macrophages by promoting GSDMD oligomerization. MTOR phosphorylates RPTOR which in turn inhibits mTORC1. As part of the mTORC2 complex, MTOR transduces signals from growth factors to pathways involved in proliferation, cytoskeletal organization, lipogenesis and anabolic output. In response to growth factors, mTORC2 phosphorylates and activates AGC protein kinase family members, including AKT (AKT1, AKT2 and AKT3), PKC (PRKCA, PRKCB and PRKCE) and SGK1. In contrast to mTORC1, mTORC2 is nutrient-insensitive. mTORC2 plays a critical role in AKT1 activation by mediating phosphorylation of different sites depending on the context, such as 'Thr-450', 'Ser-473', 'Ser-477' or 'Thr-479', facilitating the phosphorylation of the activation loop of AKT1 on 'Thr-308' by PDPK1/PDK1 which is a prerequisite for full activation. mTORC2 also regulates the phosphorylation of SGK1 at 'Ser-422'. mTORC2 may regulate the actin cytoskeleton, through phosphorylation of PRKCA, PXN and activation of the Rho-type guanine nucleotide exchange factors RHOA and RAC1A or RAC1B. The mTORC2 complex also phosphorylates various proteins involved in insulin signaling, such as FBXW8 and IGF2BP1. May also regulate insulin signaling by acting as a tyrosine protein kinase that catalyzes phosphorylation of IGF1R and INSR; additional evidence are however required to confirm this result in vivo. Regulates osteoclastogenesis by adjusting the expression of CEBPB isoforms. Plays an important regulatory role in the circadian clock function; regulates period length and rhythm amplitude of the suprachiasmatic nucleus (SCN) and liver clocks. This is Serine/threonine-protein kinase mTOR from Homo sapiens (Human).